A 1461-amino-acid chain; its full sequence is DNA topoisomerase 2 (1461 aa).

A compositionally biased stretch (acidic residues) spans 1-17 (MSESESDYFTDGSEDDF). The disordered stretch occupies residues 1–61 (MSESESDYFT…TPKPTNASET (61 aa)). Residues 41 to 52 (TNSTVSSSRSST) show a composition bias toward low complexity. ATP is bound by residues N120, N149, 177–179 (SSN), and 190–197 (GRNGFGAK). Residues 382-389 (SKKEKGKK) form an interaction with DNA region. 418-420 (QTK) provides a ligand contact to ATP. Residues 498-614 (CTLILTEGLS…GLLDIPGFLL (117 aa)) form the Toprim domain. Positions 504, 583, and 585 each coordinate Mg(2+). Positions 752–1226 (IPSVLDGFKP…SAKDLWNQDL (475 aa)) constitute a Topo IIA-type catalytic domain. Y842 serves as the catalytic O-(5'-phospho-DNA)-tyrosine intermediate. Residues 1024–1033 (KLVSSLSLAN) are interaction with DNA. 2 disordered regions span residues 1122 to 1155 (DGKP…DVGN) and 1244 to 1461 (RESL…IVDE). The segment covering 1133–1153 (LTGDDADEEEETQEQEGDEDV) has biased composition (acidic residues). The span at 1251 to 1261 (GKKKSTKRRAK) shows a compositional bias: basic residues. Composition is skewed to basic and acidic residues over residues 1274-1283 (VKVEPKEKKS) and 1406-1417 (DKPEPKERRTRE). Acidic residues predominate over residues 1434–1461 (DSDDEDEDEEDDIVMSDGDDDDDFIVDE).

It belongs to the type II topoisomerase family. As to quaternary structure, homodimer. Mg(2+) serves as cofactor. Mn(2+) is required as a cofactor. It depends on Ca(2+) as a cofactor.

The protein resides in the nucleus. The catalysed reaction is ATP-dependent breakage, passage and rejoining of double-stranded DNA.. Its function is as follows. Control of topological states of DNA by transient breakage and subsequent rejoining of DNA strands. Topoisomerase II makes double-strand breaks. The sequence is that of DNA topoisomerase 2 (TOP2) from Candida albicans (Yeast).